We begin with the raw amino-acid sequence, 369 residues long: tRNA pseudouridine synthase D (369 aa).

The active-site Nucleophile is the D80. One can recognise a TRUD domain in the interval 156 to 318; sequence GIPNWFGEQR…LKQERRALRL (163 aa).

Belongs to the pseudouridine synthase TruD family.

It carries out the reaction uridine(13) in tRNA = pseudouridine(13) in tRNA. In terms of biological role, responsible for synthesis of pseudouridine from uracil-13 in transfer RNAs. In Xanthomonas oryzae pv. oryzae (strain KACC10331 / KXO85), this protein is tRNA pseudouridine synthase D.